The chain runs to 518 residues: Arrestin-related trafficking adapter 10 (518 aa).

Residue Lys-118 forms a Glycyl lysine isopeptide (Lys-Gly) (interchain with G-Cter in ubiquitin) linkage.

This sequence belongs to the ART10 family. Interacts with RSP5. Ubiquitinated by RSP5.

It localises to the cytoplasm. Its function is as follows. May regulate endocytosis by recruiting RSP5 ubiquitin ligase activity to specific plasma membrane proteins in response to extracellular stimuli. The chain is Arrestin-related trafficking adapter 10 (ART10) from Saccharomyces cerevisiae (strain YJM789) (Baker's yeast).